The sequence spans 352 residues: Ion-translocating oxidoreductase complex subunit D (352 aa).

The next 4 helical transmembrane spans lie at 20-40 (IMLL…WFFG), 42-62 (GTLV…ALVL), 89-109 (IPPL…VIIA), and 123-143 (PAMI…TSWL). An FMN phosphoryl threonine modification is found at threonine 187. 5 helical membrane-spanning segments follow: residues 214–234 (ILAG…GLWL), 242–262 (WHIP…GWLF), 267–287 (LAAP…FFIL), 301–321 (LIFG…GGYP), and 322–342 (DGVA…DYYT).

The protein belongs to the NqrB/RnfD family. As to quaternary structure, the complex is composed of six subunits: RsxA, RsxB, RsxC, RsxD, RsxE and RsxG. The cofactor is FMN.

Its subcellular location is the cell inner membrane. Its function is as follows. Part of a membrane-bound complex that couples electron transfer with translocation of ions across the membrane. Required to maintain the reduced state of SoxR. This chain is Ion-translocating oxidoreductase complex subunit D, found in Shigella boydii serotype 18 (strain CDC 3083-94 / BS512).